The sequence spans 100 residues: Small ribosomal subunit protein uS14c (100 aa).

The protein belongs to the universal ribosomal protein uS14 family. As to quaternary structure, part of the 30S ribosomal subunit.

It localises to the plastid. The protein localises to the chloroplast. Functionally, binds 16S rRNA, required for the assembly of 30S particles. This chain is Small ribosomal subunit protein uS14c, found in Cicer arietinum (Chickpea).